The sequence spans 659 residues: Chaperone protein DnaK (659 aa).

Thr201 is modified (phosphothreonine; by autocatalysis). Over residues 571 to 592 (RSALKEDAPTEKIKEASDELSR) the composition is skewed to basic and acidic residues. A disordered region spans residues 571 to 659 (RSALKEDAPT…DVEIVDKPND (89 aa)). Residues 600–613 (AMQSQSASAAANAQ) are compositionally biased toward low complexity.

The protein belongs to the heat shock protein 70 family.

Its function is as follows. Acts as a chaperone. This is Chaperone protein DnaK from Chlamydia abortus (strain DSM 27085 / S26/3) (Chlamydophila abortus).